We begin with the raw amino-acid sequence, 90 residues long: MALDSAKKAEIVAKFARKEGDTGSPEVQIALLSARISDLTEHLKIYKKDFSSRLGLLKLVGQRKRLLSYLKRKDYQAYSKLISELNLRDK.

Belongs to the universal ribosomal protein uS15 family. Part of the 30S ribosomal subunit. Forms a bridge to the 50S subunit in the 70S ribosome, contacting the 23S rRNA.

One of the primary rRNA binding proteins, it binds directly to 16S rRNA where it helps nucleate assembly of the platform of the 30S subunit by binding and bridging several RNA helices of the 16S rRNA. Functionally, forms an intersubunit bridge (bridge B4) with the 23S rRNA of the 50S subunit in the ribosome. This chain is Small ribosomal subunit protein uS15, found in Campylobacter lari (strain RM2100 / D67 / ATCC BAA-1060).